A 504-amino-acid chain; its full sequence is Probable cytosol aminopeptidase (504 aa).

Residues Lys272 and Asp277 each coordinate Mn(2+). Lys284 is an active-site residue. Residues Asp295, Asp354, and Glu356 each coordinate Mn(2+). Arg358 is a catalytic residue.

It belongs to the peptidase M17 family. It depends on Mn(2+) as a cofactor.

It localises to the cytoplasm. It catalyses the reaction Release of an N-terminal amino acid, Xaa-|-Yaa-, in which Xaa is preferably Leu, but may be other amino acids including Pro although not Arg or Lys, and Yaa may be Pro. Amino acid amides and methyl esters are also readily hydrolyzed, but rates on arylamides are exceedingly low.. It carries out the reaction Release of an N-terminal amino acid, preferentially leucine, but not glutamic or aspartic acids.. In terms of biological role, presumably involved in the processing and regular turnover of intracellular proteins. Catalyzes the removal of unsubstituted N-terminal amino acids from various peptides. In Chlorobaculum tepidum (strain ATCC 49652 / DSM 12025 / NBRC 103806 / TLS) (Chlorobium tepidum), this protein is Probable cytosol aminopeptidase.